The following is a 181-amino-acid chain: Probable pyruvoyl-dependent arginine decarboxylase (181 aa).

Serine 43 is modified (pyruvic acid (Ser)).

This sequence belongs to the PdaD family. Requires pyruvate as cofactor.

The catalysed reaction is L-arginine + H(+) = agmatine + CO2. The chain is Probable pyruvoyl-dependent arginine decarboxylase from Chlorobium limicola (strain DSM 245 / NBRC 103803 / 6330).